The following is a 239-amino-acid chain: 7-cyano-7-deazaguanine synthase (239 aa).

8-18 (FSGGLDSTASL) provides a ligand contact to ATP. Residues C194, C209, C212, and C215 each coordinate Zn(2+).

The protein belongs to the QueC family.

The catalysed reaction is 7-carboxy-7-deazaguanine + NH4(+) + ATP = 7-cyano-7-deazaguanine + ADP + phosphate + H2O + H(+). It functions in the pathway purine metabolism; 7-cyano-7-deazaguanine biosynthesis. In terms of biological role, catalyzes the ATP-dependent conversion of 7-carboxy-7-deazaguanine (CDG) to 7-cyano-7-deazaguanine (preQ(0)). The protein is 7-cyano-7-deazaguanine synthase of Pyrococcus abyssi (strain GE5 / Orsay).